The primary structure comprises 628 residues: Inactive sodium-dependent neutral amino acid transporter B(0)AT3 (628 aa).

The Cytoplasmic segment spans residues 1 to 26 (MAHAPEPDPAACDLGDERPKWDNKAQ). The chain crosses the membrane as a helical span at residues 27 to 47 (YLLSCTGFAVGLGNIWRFPYL). The Extracellular portion of the chain corresponds to 48 to 51 (CQTY). The helical transmembrane segment at 52–74 (GGGAFLIPYVIALVFEGIPIFHV) threads the bilayer. Residues 75 to 88 (ELAIGQRLRKGSVG) lie on the Cytoplasmic side of the membrane. Residues 89–111 (VWTAISPYLSGVGLGCVTLSFLI) form a helical membrane-spanning segment. At 112 to 178 (SLYYNTIVAW…ITADINDSGS (67 aa)) the chain is on the extracellular side. Asn144, Asn168, and Asn174 each carry an N-linked (GlcNAc...) asparagine glycan. Residues 179–201 (IQWWLLICLAASWAVVYMCVIRG) form a helical membrane-spanning segment. Topologically, residues 202–207 (IETTGK) are cytoplasmic. A helical transmembrane segment spans residues 208 to 230 (VIYFTALFPYLVLTIFLIRGLTL). Over 231-253 (PGATKGLIYLFTPNMHILQNPRV) the chain is Extracellular. The helical transmembrane segment at 254–276 (WLDAATQIFFSLSLAFGGHIAFA) threads the bilayer. Residues 277–288 (SYNSPRNDCQKD) lie on the Cytoplasmic side of the membrane. A helical transmembrane segment spans residues 289-311 (AVVIALVNRMTSLYASIAVFSVL). The Extracellular segment spans residues 312-399 (GFKATNDYEH…TETDLHMPGA (88 aa)). Asn354 carries N-linked (GlcNAc...) asparagine glycosylation. The helical transmembrane segment at 400 to 422 (PVWAMLFFGMLFTLGLSTMFGTV) threads the bilayer. Residues 423–442 (EAVITPLLDVGVLPRWVPKE) are Cytoplasmic-facing. The chain crosses the membrane as a helical span at residues 443 to 465 (ALTGLVCLVCFLSATCFTLQSGN). Topologically, residues 466 to 474 (YWLEIFDNF) are extracellular. The chain crosses the membrane as a helical span at residues 475-497 (AASPNLLMLAFLEVVGVVYVYGM). Residues 498-517 (KRFCDDIAWMTGRRPSPYWR) lie on the Cytoplasmic side of the membrane. Residues 518–540 (LTWRVVSPLLLTIFVAYIILLFW) form a helical membrane-spanning segment. Residues 541-568 (KPLRYKAWNPKYELFPSRQEKLYPGWAR) are Extracellular-facing. The helical transmembrane segment at 569-591 (AACVLLSLLPVLWVPVAALAQLL) threads the bilayer. Topologically, residues 592–628 (TRRRRTWRDRDARPDTDMRPDTDTRPDTDMRPDTDMR) are cytoplasmic. The interval 602-628 (DARPDTDMRPDTDTRPDTDMRPDTDMR) is disordered.

It belongs to the sodium:neurotransmitter symporter (SNF) (TC 2.A.22) family. SLC6A18 subfamily. As to expression, abundantly expressed in kidney, but not in intestine.

The protein localises to the membrane. Its function is as follows. Does not show neutral amino acid transporter activity. This Homo sapiens (Human) protein is Inactive sodium-dependent neutral amino acid transporter B(0)AT3.